A 391-amino-acid chain; its full sequence is Zinc finger protein ubi-d4 (391 aa).

An N-acetylalanine modification is found at A2. Residues K10, K99, K107, and K108 each participate in a glycyl lysine isopeptide (Lys-Gly) (interchain with G-Cter in SUMO2) cross-link. Disordered stretches follow at residues 79–147 (WRKK…GEFP) and 165–199 (DDLD…KLDA). Composition is skewed to basic and acidic residues over residues 100-110 (PDTDQTLKKEG) and 126-140 (DPLE…RVDD). S142 is subject to Phosphoserine. Over residues 165–174 (DDLDDEDYEE) the composition is skewed to acidic residues. Residue Y172 is modified to Phosphotyrosine. Position 176 is a phosphothreonine (T176). Residues K178 and K196 each participate in a glycyl lysine isopeptide (Lys-Gly) (interchain with G-Cter in SUMO2) cross-link. At S200 the chain carries Phosphoserine. The segment at 209–232 (YACDICGKRYKNRPGLSYHYAHSH) adopts a C2H2-type zinc-finger fold. Positions 233 to 266 (LAEEEGEDKEDSRPPTPVSQRSEEQKSKKGPDGL) are disordered. S244 carries the post-translational modification Phosphoserine. The span at 253-263 (RSEEQKSKKGP) shows a compositional bias: basic and acidic residues. 2 consecutive PHD-type zinc fingers follow at residues 270-330 (NNYC…CKCC) and 327-377 (CKCC…CLDL). S280 is subject to Phosphoserine. K281 participates in a covalent cross-link: Glycyl lysine isopeptide (Lys-Gly) (interchain with G-Cter in SUMO2).

This sequence belongs to the requiem/DPF family. In terms of assembly, interacts with the nucleosomes, in particular nucleosomes bearing histone H3 crotonylated at 'Lys-14' (H3K14cr) for which DPF2 has high affinity. Also interacts (via PHD-type zinc finger domains) with histone H3 butyrylated at 'Lys-14' (H3K14bu), histone H3 propionylated at 'Lys-14' (H3K14pr), and histone H3 acetylated at 'Lys-14' (H3K14ac). Interacts with histone H3 acetylated at 'Lys-9' (H3K9ac), histone H3 di-methylated at 'Lys-9' (H3K9me2), and histone H3 tri-methylated at 'Lys-9' (H3K9me3). Interacts with histone H4 acetylated at 'Lys-12' (H4K12ac). Interacts with histone H4 acetylated at 'Lys-16' (H4K16ac). Interacts with SWI/SNF complex components. Interacts with SMARCA2, SMARCA4, SMARCB1 and SMARCD1. Interacts with SMARCC1, SMARCC2 and ACTL6A. Interacts with RUNX1. In embryo, highest levels are seen in brain, eyes, thymus and olfactory epithelium in nose, whereas several other tissues, including the musculoskeletal system, show moderate expression. In adult, higher expression in testis, medium in thymus and spleen, lower in certain parts of the brain as the hippocampus. No expression in adult heart, lung, liver, duodenum and kidney.

Its subcellular location is the nucleus. The protein localises to the cytoplasm. In terms of biological role, plays an active role in transcriptional regulation by binding modified histones H3 and H4. Is a negative regulator of myeloid differentiation of hematopoietic progenitor cells. Might also have a role in the development and maturation of lymphoid cells. Involved in the regulation of non-canonical NF-kappa-B pathway. The sequence is that of Zinc finger protein ubi-d4 (Dpf2) from Mus musculus (Mouse).